A 256-amino-acid chain; its full sequence is MEIIPAIDLLNGKCVRLNQGNYNEVTKFNSDPVKQAQIWESKGAKRLHLVDLDGAKTGEPINDLTIKEIKKSITIPIQLGGGIRSIDRAKELFDIGIDRIILGTIAIEKPELVKDLSKEYPKRVAVGIDAKEGMVATRGWLKQSKISSLDLAKQLNDLDLAAIISTDIATDGTLKGPNVQALREIAEISINPVIASGGIGSIADLISLADFADEGIEGIIVGRALYDGSIDLKEAILTLKNLLLQDAFNEKDKFLV.

Asp-8 acts as the Proton acceptor in catalysis. The active-site Proton donor is Asp-129.

Belongs to the HisA/HisF family.

It is found in the cytoplasm. It carries out the reaction 1-(5-phospho-beta-D-ribosyl)-5-[(5-phospho-beta-D-ribosylamino)methylideneamino]imidazole-4-carboxamide = 5-[(5-phospho-1-deoxy-D-ribulos-1-ylimino)methylamino]-1-(5-phospho-beta-D-ribosyl)imidazole-4-carboxamide. The protein operates within amino-acid biosynthesis; L-histidine biosynthesis; L-histidine from 5-phospho-alpha-D-ribose 1-diphosphate: step 4/9. This Prochlorococcus marinus (strain NATL1A) protein is 1-(5-phosphoribosyl)-5-[(5-phosphoribosylamino)methylideneamino] imidazole-4-carboxamide isomerase.